A 242-amino-acid polypeptide reads, in one-letter code: Small ribosomal subunit protein uS2 (242 aa).

The protein belongs to the universal ribosomal protein uS2 family.

In Shewanella oneidensis (strain ATCC 700550 / JCM 31522 / CIP 106686 / LMG 19005 / NCIMB 14063 / MR-1), this protein is Small ribosomal subunit protein uS2.